Here is a 1576-residue protein sequence, read N- to C-terminus: Proton channel OtopLc (1576 aa).

Disordered stretches follow at residues 1-602 and 621-736; these read MDSS…SSPP and QIGS…SSPV. Composition is skewed to low complexity over residues 58–67 and 76–85; these read SLAEEVLLLV and LLGQPLPTLT. Composition is skewed to acidic residues over residues 103–116, 159–171, 186–198, and 206–216; these read DEGD…EPVP, DDGE…DAEE, SNPD…EEQE, and PKEEDEEEDDD. The segment covering 219–228 has biased composition (pro residues); sequence TPPPPLPPLP. A compositionally biased stretch (polar residues) spans 229–241; sequence SNFSYVQGHNLGQ. N-linked (GlcNAc...) asparagine glycosylation is present at Asn230. Residues 243 to 252 are compositionally biased toward low complexity; sequence TPPLTKSPSN. Positions 253-264 are enriched in pro residues; that stretch reads SPSPPVTPPPCP. A glycan (N-linked (GlcNAc...) asparagine) is linked at Asn267. Residues 316–341 show a composition bias toward acidic residues; that stretch reads DQPEPEDQPPEPENEPEPEPEPEPEP. Residues 347–356 show a composition bias toward basic and acidic residues; that stretch reads AREDYSRSLD. The span at 362–376 shows a compositional bias: polar residues; sequence TTITTPPSNGYSASS. The span at 384–393 shows a compositional bias: basic and acidic residues; the sequence is HFAELDEDRG. Residues 402–419 are compositionally biased toward acidic residues; it reads QEPEEEVEEEEEEEEEEL. Residues 420-433 show a composition bias toward basic and acidic residues; the sequence is TKETDEISVDRESL. The span at 434-457 shows a compositional bias: polar residues; the sequence is QDQGGDSISSPRPASILTGSISTS. Over residues 465–507 the composition is skewed to low complexity; it reads SPKPESRGPSRSGSQRSQLRSGSQQGSIAESRGGSRIGSRTGS. 2 stretches are compositionally biased toward polar residues: residues 519-534 and 545-555; these read PQAS…SQGQ and KSGSQRMQSPQ. Residues 563-575 show a composition bias toward pro residues; it reads MPSPPLMRSPPPE. Residues 661-685 show a composition bias toward low complexity; the sequence is AAAAPAVTTTAATTAVTSQPRSHFT. A compositionally biased stretch (basic residues) spans 686–709; sequence SSHHHYHLPHQFQHPHHQNHHTHS. The chain crosses the membrane as a helical span at residues 741–761; it reads LFMAGVAPPIAAGAGSLMAMP. Residues 771–845 form a disordered region; that stretch reads GRVSARSGSQ…GSSSQPALSG (75 aa). Positions 776–799 are enriched in polar residues; it reads RSGSQHHVTIDESSLPSHKGNIQE. Residues 826-839 show a composition bias toward low complexity; sequence DSSDPPSSPGGSSS. The next 2 helical transmembrane spans lie at 891–911 and 931–951; these read ALAT…GIAF and LYLY…LIWG. Over residues 962 to 973 the composition is skewed to polar residues; the sequence is PSKSATKASGTD. The tract at residues 962–1001 is disordered; that stretch reads PSKSATKASGTDSMDESDTDSNSVHHRLPPPIPVRRPSLL. A run of 3 helical transmembrane segments spans residues 1019 to 1039, 1051 to 1071, and 1084 to 1104; these read GAVA…GQYF, LLAL…YFIF, and IIAR…WLNV. Residue Asn1121 is glycosylated (N-linked (GlcNAc...) asparagine). 7 helical membrane passes run 1179–1199, 1239–1259, 1272–1292, 1310–1330, 1340–1360, 1381–1401, and 1412–1432; these read FLFP…YVMW, FVGI…FVLI, VTIC…VGMI, ILLV…VIAG, LVPI…MFIL, IVTF…LEKS, and FYGL…AIFY. An N-linked (GlcNAc...) asparagine glycan is attached at Asn1479. Positions 1498–1549 are disordered; sequence EEVDSGESNSAEDAGAGAGSGGSRGSGGGAGAAEAGEAGEEGQQGGDSSCGL. A compositionally biased stretch (low complexity) spans 1503 to 1512; sequence GESNSAEDAG. Over residues 1513–1528 the composition is skewed to gly residues; it reads AGAGSGGSRGSGGGAG.

It belongs to the otopetrin family.

It localises to the cell membrane. Functionally, proton-selective channel that specifically transports protons into cells. Proton-selective channel activity is probably required in cell types that use changes in intracellular pH for cell signaling or to regulate biochemical or developmental processes. The sequence is that of Proton channel OtopLc from Drosophila melanogaster (Fruit fly).